Here is a 345-residue protein sequence, read N- to C-terminus: S-adenosylmethionine:tRNA ribosyltransferase-isomerase (345 aa).

It belongs to the QueA family. Monomer.

The protein localises to the cytoplasm. The enzyme catalyses 7-aminomethyl-7-carbaguanosine(34) in tRNA + S-adenosyl-L-methionine = epoxyqueuosine(34) in tRNA + adenine + L-methionine + 2 H(+). It participates in tRNA modification; tRNA-queuosine biosynthesis. Transfers and isomerizes the ribose moiety from AdoMet to the 7-aminomethyl group of 7-deazaguanine (preQ1-tRNA) to give epoxyqueuosine (oQ-tRNA). The protein is S-adenosylmethionine:tRNA ribosyltransferase-isomerase of Shewanella woodyi (strain ATCC 51908 / MS32).